A 430-amino-acid polypeptide reads, in one-letter code: Probable sulfoacetate transporter SauU (430 aa).

10 helical membrane passes run 47 to 67, 83 to 103, 142 to 162, 165 to 185, 228 to 248, 263 to 283, 301 to 321, 327 to 347, 362 to 382, and 390 to 410; these read LGLV…LGGW, LIWG…ILVV, FARL…AAAG, EAFI…AFFF, WLVT…LTWL, LALF…LGGV, AVLF…TFTA, VILL…LWSL, MMNT…GYLI, and LPFM…LFIN.

It belongs to the major facilitator superfamily.

It localises to the cell membrane. May transport sulfoacetate into the cell. The protein is Probable sulfoacetate transporter SauU (sauU) of Cupriavidus necator (strain ATCC 17699 / DSM 428 / KCTC 22496 / NCIMB 10442 / H16 / Stanier 337) (Ralstonia eutropha).